Here is a 336-residue protein sequence, read N- to C-terminus: RHOMBOID-like protein 12, mitochondrial (336 aa).

A mitochondrion-targeting transit peptide spans 1–85; it reads MKAIFNRRVV…RGFFASALGN (85 aa). 6 helical membrane passes run 135–155, 185–205, 216–236, 254–274, 276–296, and 307–327; these read VVLG…VFNQ, IDIG…TSIA, LYLA…AYMA, PGLG…FLHP, ATLY…IFLI, and NSNI…IAWA. S259 (nucleophile) is an active-site residue. The active-site Charge relay system is the H315.

Belongs to the peptidase S54 family.

The protein resides in the mitochondrion membrane. In terms of biological role, probable rhomboid-type serine protease that catalyzes intramembrane proteolysis. Unable to cleave either of the yeast Pcp1 substrates in yeast cells. The sequence is that of RHOMBOID-like protein 12, mitochondrial from Arabidopsis thaliana (Mouse-ear cress).